The primary structure comprises 138 residues: Small ribosomal subunit protein uS11c (138 aa).

The interval 1-23 (MAKPILRIGSRKNTRSGSRKNVR) is disordered. Basic residues predominate over residues 9-23 (GSRKNTRSGSRKNVR).

The protein belongs to the universal ribosomal protein uS11 family. Part of the 30S ribosomal subunit.

Its subcellular location is the plastid. The protein localises to the chloroplast. The protein is Small ribosomal subunit protein uS11c of Barbarea verna (Land cress).